We begin with the raw amino-acid sequence, 410 residues long: Probable 2,3-bisphosphoglycerate-independent phosphoglycerate mutase (410 aa).

This sequence belongs to the BPG-independent phosphoglycerate mutase family. A-PGAM subfamily.

It catalyses the reaction (2R)-2-phosphoglycerate = (2R)-3-phosphoglycerate. It functions in the pathway carbohydrate degradation; glycolysis; pyruvate from D-glyceraldehyde 3-phosphate: step 3/5. Functionally, catalyzes the interconversion of 2-phosphoglycerate and 3-phosphoglycerate. This is Probable 2,3-bisphosphoglycerate-independent phosphoglycerate mutase from Deinococcus radiodurans (strain ATCC 13939 / DSM 20539 / JCM 16871 / CCUG 27074 / LMG 4051 / NBRC 15346 / NCIMB 9279 / VKM B-1422 / R1).